The sequence spans 116 residues: Large ribosomal subunit protein uL18 (116 aa).

This sequence belongs to the universal ribosomal protein uL18 family. In terms of assembly, part of the 50S ribosomal subunit; part of the 5S rRNA/L5/L18/L25 subcomplex. Contacts the 5S and 23S rRNAs.

Functionally, this is one of the proteins that bind and probably mediate the attachment of the 5S RNA into the large ribosomal subunit, where it forms part of the central protuberance. This Shewanella sediminis (strain HAW-EB3) protein is Large ribosomal subunit protein uL18.